A 793-amino-acid polypeptide reads, in one-letter code: Cation channel sperm-associated auxiliary subunit delta (793 aa).

The first 20 residues, M1 to A20, serve as a signal peptide directing secretion. The Extracellular portion of the chain corresponds to Q21–G725. 7 disulfide bridges follow: C24/C370, C60/C146, C145/C153, C388/C497, C511/C703, C526/C573, and C625/C653. An N-linked (GlcNAc...) asparagine glycan is attached at N128. N231, N241, N473, N539, and N631 each carry an N-linked (GlcNAc...) asparagine glycan. The helical transmembrane segment at V726–R747 threads the bilayer. The Cytoplasmic portion of the chain corresponds to L748–S793.

Belongs to the CATSPERD family. Component of the CatSper complex or CatSpermasome composed of the core pore-forming members CATSPER1, CATSPER2, CATSPER3 and CATSPER4 as well as auxiliary members CATSPERB, CATSPERG, CATSPERD, CATSPERE, CATSPERZ, C2CD6/CATSPERT, TMEM249, TMEM262 and EFCAB9. HSPA1 may be an additional auxiliary complex member. The core complex members CATSPER1, CATSPER2, CATSPER3 and CATSPER4 form a heterotetrameric channel. The auxiliary CATSPERB, CATSPERG, CATSPERD and CATSPERE subunits form a pavilion-like structure over the pore which stabilizes the complex through interactions with CATSPER4, CATSPER3, CATSPER1 and CATSPER2 respectively. TMEM262/CATSPERH interacts with CATSPERB, further stabilizing the complex. C2CD6/CATSPERT interacts at least with CATSPERD and is required for targeting the CatSper complex in the flagellar membrane.

The protein resides in the cell projection. Its subcellular location is the cilium. It localises to the flagellum membrane. Its function is as follows. Auxiliary component of the CatSper complex, a complex involved in sperm cell hyperactivation. Sperm cell hyperactivation is needed for sperm motility which is essential late in the preparation of sperm for fertilization. Required for CATSPER1 stability before intraflagellar transport and/or incorporation of the CatSper complex channel into the flagellar membrane. The polypeptide is Cation channel sperm-associated auxiliary subunit delta (Macaca fascicularis (Crab-eating macaque)).